The primary structure comprises 321 residues: Ribose-phosphate pyrophosphokinase 2 (321 aa).

D130, H132, and D145 together coordinate Mg(2+). S172 carries the post-translational modification Phosphoserine.

The protein belongs to the ribose-phosphate pyrophosphokinase family.

It localises to the cytoplasm. The catalysed reaction is D-ribose 5-phosphate + ATP = 5-phospho-alpha-D-ribose 1-diphosphate + AMP + H(+). Its pathway is metabolic intermediate biosynthesis; 5-phospho-alpha-D-ribose 1-diphosphate biosynthesis; 5-phospho-alpha-D-ribose 1-diphosphate from D-ribose 5-phosphate (route I): step 1/1. 5-phosphoribose 1-diphosphate synthase involved in nucleotide, histidine, and tryptophan biosynthesis. Active in heteromultimeric complexes with other 5-phosphoribose 1-diphosphate synthases. The chain is Ribose-phosphate pyrophosphokinase 2 from Schizosaccharomyces pombe (strain 972 / ATCC 24843) (Fission yeast).